The primary structure comprises 645 residues: 1,4-alpha-glucan branching enzyme GlgB (645 aa).

Residue D309 is the Nucleophile of the active site. The active-site Proton donor is the E352. Positions 619–645 (VKTRKGSKKQDGSKTKVRSNVTSRGKR) are disordered. A compositionally biased stretch (polar residues) spans 636-645 (RSNVTSRGKR).

The protein belongs to the glycosyl hydrolase 13 family. GlgB subfamily. As to quaternary structure, monomer.

It carries out the reaction Transfers a segment of a (1-&gt;4)-alpha-D-glucan chain to a primary hydroxy group in a similar glucan chain.. It participates in glycan biosynthesis; glycogen biosynthesis. Catalyzes the formation of the alpha-1,6-glucosidic linkages in glycogen by scission of a 1,4-alpha-linked oligosaccharide from growing alpha-1,4-glucan chains and the subsequent attachment of the oligosaccharide to the alpha-1,6 position. The sequence is that of 1,4-alpha-glucan branching enzyme GlgB from Bacillus mycoides (strain KBAB4) (Bacillus weihenstephanensis).